We begin with the raw amino-acid sequence, 155 residues long: MAKGSGKVLAQNKKAGHDYFIEDTIEAGMVLTGTEIKSIRAGKAQLKDSYVRITNGEAWISNMHVSPFDQGNRFNHDPLRARKLLLHKKQIGELVGAVKRDGYTIVPLKMYIKDGYAKLLIGVGKGKKDYDKRNDMRKKEAKREMERTFKSKNQY.

A compositionally biased stretch (basic and acidic residues) spans 127 to 149 (KKDYDKRNDMRKKEAKREMERTF). The segment at 127–155 (KKDYDKRNDMRKKEAKREMERTFKSKNQY) is disordered.

Belongs to the SmpB family.

It localises to the cytoplasm. Functionally, required for rescue of stalled ribosomes mediated by trans-translation. Binds to transfer-messenger RNA (tmRNA), required for stable association of tmRNA with ribosomes. tmRNA and SmpB together mimic tRNA shape, replacing the anticodon stem-loop with SmpB. tmRNA is encoded by the ssrA gene; the 2 termini fold to resemble tRNA(Ala) and it encodes a 'tag peptide', a short internal open reading frame. During trans-translation Ala-aminoacylated tmRNA acts like a tRNA, entering the A-site of stalled ribosomes, displacing the stalled mRNA. The ribosome then switches to translate the ORF on the tmRNA; the nascent peptide is terminated with the 'tag peptide' encoded by the tmRNA and targeted for degradation. The ribosome is freed to recommence translation, which seems to be the essential function of trans-translation. The sequence is that of SsrA-binding protein from Lysinibacillus sphaericus (strain C3-41).